The chain runs to 398 residues: Protein FAM53A (398 aa).

Positions 85–253 (QWQPQSPRPG…TSTPALGGRR (169 aa)) are disordered. Polar residues predominate over residues 103–115 (VDPSESTGSSTAP). Positions 123-132 (SLSEPEELVR) are enriched in basic and acidic residues. Residue S125 is modified to Phosphoserine. Low complexity-rich tracts occupy residues 176 to 193 (STGP…ASGG) and 234 to 250 (TPLP…PALG). The Nuclear localization signal motif lies at 268 to 276 (KRSRRKRRR). 2 positions are modified to phosphoserine: S301 and S304. Residues 336 to 398 (PGCSQRGLRT…ELDLEQIENN (63 aa)) form a disordered region. The span at 363 to 375 (GSRRSSGDPRDGD) shows a compositional bias: basic and acidic residues.

Belongs to the FAM53 family.

It localises to the nucleus. Its function is as follows. May play an important role in neural development; the dorsomedial roof of the third ventricle. In Homo sapiens (Human), this protein is Protein FAM53A.